We begin with the raw amino-acid sequence, 229 residues long: MDKIKQLFANNYSWAQRMKEENSTYFKELADHQTPHYLWIGCSDSRVPAEKLTNLEPGELFVHRNVANQVIHTDFNCLSVVQYAVDVLKIEHIIICGHTNCGGIHAAMADKDLGLINNWLLHIRDIWFKHGHLLGKLSPEKRADMLTKINVAEQVYNLGRTSIVKSAWERGQKLSLHGWVYDVNDGFLVDQGVMATSRETLEISYRNAIARLSILDEENILKKDHLENT.

4 residues coordinate Zn(2+): Cys-42, Asp-44, His-98, and Cys-101.

It belongs to the beta-class carbonic anhydrase family. Requires Zn(2+) as cofactor.

The enzyme catalyses hydrogencarbonate + H(+) = CO2 + H2O. In Haemophilus influenzae (strain ATCC 51907 / DSM 11121 / KW20 / Rd), this protein is Carbonic anhydrase 2 (can).